The sequence spans 130 residues: Small ribosomal subunit protein uS9 (130 aa).

Belongs to the universal ribosomal protein uS9 family.

The polypeptide is Small ribosomal subunit protein uS9 (Shewanella baltica (strain OS155 / ATCC BAA-1091)).